The primary structure comprises 511 residues: Acidic amino acid decarboxylase GADL1 (511 aa).

N6-(pyridoxal phosphate)lysine is present on K323.

The protein belongs to the group II decarboxylase family. Homodimer. It depends on pyridoxal 5'-phosphate as a cofactor.

The enzyme catalyses L-aspartate + H(+) = beta-alanine + CO2. The catalysed reaction is 3-sulfino-L-alanine + H(+) = hypotaurine + CO2. Functionally, catalyzes the decarboxylation of L-aspartate, 3-sulfino-L-alanine (cysteine sulfinic acid), and L-cysteate to beta-alanine, hypotaurine and taurine, respectively. The preferred substrate is L-aspartate. Does not exhibit any decarboxylation activity toward glutamate. The protein is Acidic amino acid decarboxylase GADL1 (gadl1) of Xenopus tropicalis (Western clawed frog).